Here is a 270-residue protein sequence, read N- to C-terminus: 3-methyl-2-oxobutanoate hydroxymethyltransferase (270 aa).

Positions 50 and 89 each coordinate Mg(2+). Residues 50 to 51 (DS), Asp-89, and Lys-118 contribute to the 3-methyl-2-oxobutanoate site. Glu-120 lines the Mg(2+) pocket. Glu-187 acts as the Proton acceptor in catalysis.

This sequence belongs to the PanB family. As to quaternary structure, homodecamer; pentamer of dimers. The cofactor is Mg(2+).

Its subcellular location is the cytoplasm. It catalyses the reaction 3-methyl-2-oxobutanoate + (6R)-5,10-methylene-5,6,7,8-tetrahydrofolate + H2O = 2-dehydropantoate + (6S)-5,6,7,8-tetrahydrofolate. The protein operates within cofactor biosynthesis; (R)-pantothenate biosynthesis; (R)-pantoate from 3-methyl-2-oxobutanoate: step 1/2. Functionally, catalyzes the reversible reaction in which hydroxymethyl group from 5,10-methylenetetrahydrofolate is transferred onto alpha-ketoisovalerate to form ketopantoate. This chain is 3-methyl-2-oxobutanoate hydroxymethyltransferase, found in Helicobacter acinonychis (strain Sheeba).